A 430-amino-acid chain; its full sequence is Dihydroorotase (430 aa).

Positions 60 and 62 each coordinate Zn(2+). Residues 62 to 64 (HLR) and N94 contribute to the substrate site. D152, H179, H232, and D305 together coordinate Zn(2+). D305 is a catalytic residue. Substrate is bound by residues H309 and 323-324 (FG).

It belongs to the metallo-dependent hydrolases superfamily. DHOase family. Class I DHOase subfamily. Zn(2+) is required as a cofactor.

The enzyme catalyses (S)-dihydroorotate + H2O = N-carbamoyl-L-aspartate + H(+). It participates in pyrimidine metabolism; UMP biosynthesis via de novo pathway; (S)-dihydroorotate from bicarbonate: step 3/3. Catalyzes the reversible cyclization of carbamoyl aspartate to dihydroorotate. The chain is Dihydroorotase from Solibacter usitatus (strain Ellin6076).